The sequence spans 193 residues: MKEIQIPRKSFARSSELGAKRLKDPEMKNRKVTTEKRQIATFSDVSFESTKDPMDFSPISQISGAISDSEAESVIQGSSLDLMSTPEICLPADDSPVSTITSVEARIDTSSTDRIQSIVDLPASVQSLRGEINELKKLICSVDNSAEINWVDRVVTVKFRIVLLSFILWAILAAIVVFFSSGEERAYRGPLPT.

A disordered region spans residues 15-35 (SELGAKRLKDPEMKNRKVTTE). The segment covering 18 to 35 (GAKRLKDPEMKNRKVTTE) has biased composition (basic and acidic residues). The KASH domain occupies 155-193 (VTVKFRIVLLSFILWAILAAIVVFFSSGEERAYRGPLPT). Residues 161-181 (IVLLSFILWAILAAIVVFFSS) form a helical membrane-spanning segment. The Required for nuclear localization signature appears at 190-193 (PLPT).

In terms of assembly, interacts with SUN1 and SUN2.

Its subcellular location is the nucleus membrane. The chain is Protein SINE3 from Arabidopsis thaliana (Mouse-ear cress).